The following is a 190-amino-acid chain: E3 ubiquitin-protein ligase RNF183 (190 aa).

The Cytoplasmic portion of the chain corresponds to 1 to 159 (MSEPQGQELR…RECVRNPHFR (159 aa)). The RING-type zinc-finger motif lies at 13 to 60 (CPVCWNPFNNTFHTPKVLDCCHSFCVECLAHLSLVTPARRRLLCPLCR). A helical; Anchor for type IV membrane protein transmembrane segment spans residues 160-180 (IFAYLMAVILSVTLLLIFSIF). At 181-190 (WTKQFFWGMG) the chain is on the lumenal side.

Interacts with FATE1. Interacts with SEC16A. Interacts with BCL2L1. Post-translationally, autoubiquitinated (in vitro). Highly expressed in the kidney and testis.

The protein localises to the endoplasmic reticulum membrane. It localises to the endoplasmic reticulum. The protein resides in the golgi apparatus. It is found in the cis-Golgi network membrane. Its subcellular location is the lysosome membrane. It carries out the reaction S-ubiquitinyl-[E2 ubiquitin-conjugating enzyme]-L-cysteine + [acceptor protein]-L-lysine = [E2 ubiquitin-conjugating enzyme]-L-cysteine + N(6)-ubiquitinyl-[acceptor protein]-L-lysine.. The protein operates within protein modification; protein ubiquitination. Acts as an E3 ubiquitin ligase catalyzing the covalent attachment of ubiquitin moieties onto substrate proteins. Triggers apoptosis in response to prolonged ER stress by mediating the polyubiquitination and subsequent proteasomal degradation of BCL2L1. May collaborate with FATE1 to restrain BIK protein levels thus regulating apoptotic signaling. This Mus musculus (Mouse) protein is E3 ubiquitin-protein ligase RNF183 (Rnf183).